The sequence spans 218 residues: Interleukin-37 (218 aa).

The disordered stretch occupies residues 1-40; sequence MSFVGENSGVKMGSEDWEKDEPQCCLEDPAGSPLEPGPSL. The propeptide at 1 to 45 is removed in mature form; the sequence is MSFVGENSGVKMGSEDWEKDEPQCCLEDPAGSPLEPGPSLPTMNF. Basic and acidic residues predominate over residues 13 to 22; sequence GSEDWEKDEP.

The protein belongs to the IL-1 family. As to quaternary structure, interacts with SMAD3. Binds IL18R1, but not to IL1R1, with lower affinity than IL18, and does not seem to act as a receptor antagonist for IL18. Interacts with cargo receptor TMED10; the interaction mediates the translocation from the cytoplasm into the ERGIC (endoplasmic reticulum-Golgi intermediate compartment) and thereby secretion. In terms of processing, proteolytically converted to the mature form by CASP1. In terms of tissue distribution, in general, low constitutive expression, if any, in healthy tissues; high expression in inflammatory counterparts, including in synovial tissues from individuals with active rheumatoid arthritis. Isoform A, isoform B and isoform C are expressed in testis, colon, placenta, lung and lymph node. Isoform D and isoform E were found only in testis and bone marrow. Whereas only isoform A is found in brain, only isoform B in kidney and only isoform C in heart.

Its subcellular location is the cytoplasm. It localises to the cytosol. The protein localises to the nucleus. The protein resides in the secreted. Immune regulatory cytokine that acts as a suppressor of innate inflammatory and immune responses involved in curbing excessive inflammation. Signaling can occur via two mechanisms, intracellularly through nuclear translocation with SMAD3 and extracellularly after secretion and binding to its receptor composed of IL18R1 and IL18RAP. Suppresses, or reduces, pro-inflammatory cytokine production, including IL1A and IL6, as well as CCL12, CSF1, CSF2, CXCL13, IL1B, IL23A and IL1RN, but spares anti-inflammatory cytokines. Inhibits dendritic cell activation. The protein is Interleukin-37 of Homo sapiens (Human).